We begin with the raw amino-acid sequence, 147 residues long: Probable disulfide formation protein (147 aa).

The chain crosses the membrane as a helical span at residues 9–28; the sequence is NYSLYFAWLTALIATLGSLY. Cys-38 and Cys-41 are oxidised to a cystine. The next 2 helical transmembrane spans lie at 43 to 62 and 69 to 86; these read YQRV…AYRT and YALP…YQYL. A disulfide bond links Cys-99 and Cys-106. The helical transmembrane segment at 115–138 threads the bilayer; that stretch reads GFITLPFLGMLATLIMSFFLIMAF.

Belongs to the DsbB family. BdbC subfamily.

It is found in the cell inner membrane. In terms of biological role, required for disulfide bond formation in some proteins. This chain is Probable disulfide formation protein, found in Coxiella burnetii (strain CbuK_Q154) (Coxiella burnetii (strain Q154)).